Consider the following 250-residue polypeptide: Probable E3 ubiquitin-protein ligase RHY1A (250 aa).

The span at 1–10 (MTSASELFST) shows a compositional bias: polar residues. A disordered region spans residues 1–106 (MTSASELFST…ETQSSSFVNL (106 aa)). Residues 29-47 (YRHHSHHHHRRHGVHHHNQ) show a composition bias toward basic residues. A compositionally biased stretch (basic and acidic residues) spans 48–58 (RHDSDGCDPLR). Basic residues predominate over residues 60–69 (PTPRLRRFFH). The segment covering 71–80 (PIQERSRPIR) has biased composition (basic and acidic residues). Over residues 91 to 102 (TDSTDTETQSSS) the composition is skewed to low complexity. The RING-type; atypical zinc-finger motif lies at 203-244 (CSICLESFTKGDMLISLPCTHSFHSSCLNPWLRACGDCPCCR).

It catalyses the reaction S-ubiquitinyl-[E2 ubiquitin-conjugating enzyme]-L-cysteine + [acceptor protein]-L-lysine = [E2 ubiquitin-conjugating enzyme]-L-cysteine + N(6)-ubiquitinyl-[acceptor protein]-L-lysine.. It functions in the pathway protein modification; protein ubiquitination. In terms of biological role, probable E3 ubiquitin-protein ligase that may possess E3 ubiquitin ligase activity in vitro. The chain is Probable E3 ubiquitin-protein ligase RHY1A from Arabidopsis thaliana (Mouse-ear cress).